Here is a 124-residue protein sequence, read N- to C-terminus: UPF0102 protein Mmc1_3298 (124 aa).

Belongs to the UPF0102 family.

The sequence is that of UPF0102 protein Mmc1_3298 from Magnetococcus marinus (strain ATCC BAA-1437 / JCM 17883 / MC-1).